Here is a 372-residue protein sequence, read N- to C-terminus: Putative actin-27 (372 aa).

It belongs to the actin family.

It is found in the cytoplasm. It localises to the cytoskeleton. It carries out the reaction ATP + H2O = ADP + phosphate + H(+). Functionally, actins are highly conserved proteins that are involved in various types of cell motility and are ubiquitously expressed in all eukaryotic cells. Multiple isoforms are involved in various cellular functions such as cytoskeleton structure, cell mobility, chromosome movement and muscle contraction. The chain is Putative actin-27 (act27) from Dictyostelium discoideum (Social amoeba).